Here is a 438-residue protein sequence, read N- to C-terminus: Methylenetetrahydrofolate--tRNA-(uracil-5-)-methyltransferase TrmFO (438 aa).

10–15 (GGGLAG) serves as a coordination point for FAD.

This sequence belongs to the MnmG family. TrmFO subfamily. Requires FAD as cofactor.

It localises to the cytoplasm. The enzyme catalyses uridine(54) in tRNA + (6R)-5,10-methylene-5,6,7,8-tetrahydrofolate + NADH + H(+) = 5-methyluridine(54) in tRNA + (6S)-5,6,7,8-tetrahydrofolate + NAD(+). It carries out the reaction uridine(54) in tRNA + (6R)-5,10-methylene-5,6,7,8-tetrahydrofolate + NADPH + H(+) = 5-methyluridine(54) in tRNA + (6S)-5,6,7,8-tetrahydrofolate + NADP(+). Functionally, catalyzes the folate-dependent formation of 5-methyl-uridine at position 54 (M-5-U54) in all tRNAs. The sequence is that of Methylenetetrahydrofolate--tRNA-(uracil-5-)-methyltransferase TrmFO from Trichormus variabilis (strain ATCC 29413 / PCC 7937) (Anabaena variabilis).